A 412-amino-acid polypeptide reads, in one-letter code: MIARCKGCSDLLPEDMLRFRYIESIFHDSCITWGYEEVRTPMLEYLSLFTSSGTLTPQMLKRVYSFLDWDGWSGERVVLRPDGTIPAARLYIDNLQEMEVARLCYTSNIFRFDETGKKSRENWQLGAEIIGVTGSEANAELITLALETLSRLGFEDVELRLSHSQLIKAVLAQLEPNADEQHKIFDQLLDGDVALMSRLEAEKPELFRTLKLLMENKGTSAAFLKNVMAMAGAAGGDLEEPLNDFIAGVDVLDKLGVSYQIDLASGKGFEYYTGVIFHLFVNGEHVGGGGRYDKLIPLLGGPDKPAAGFALYLNRLIPMIDAEDMYDMVEEKILIKYEGDNLKNAYEMANLIRECGISAELFYPGVDTAAYGWAVTVKAADSYEVTDLIEDKTTEFKNQAEVICLLSGEEDA.

It belongs to the class-II aminoacyl-tRNA synthetase family. HisZ subfamily. Heteromultimer composed of HisG and HisZ subunits.

The protein localises to the cytoplasm. Its pathway is amino-acid biosynthesis; L-histidine biosynthesis; L-histidine from 5-phospho-alpha-D-ribose 1-diphosphate: step 1/9. In terms of biological role, required for the first step of histidine biosynthesis. May allow the feedback regulation of ATP phosphoribosyltransferase activity by histidine. This is ATP phosphoribosyltransferase regulatory subunit from Dehalococcoides mccartyi (strain ATCC BAA-2266 / KCTC 15142 / 195) (Dehalococcoides ethenogenes (strain 195)).